The sequence spans 364 residues: Anhydro-N-acetylmuramic acid kinase (364 aa).

An ATP-binding site is contributed by 11–18 (GSSLDGID).

It belongs to the anhydro-N-acetylmuramic acid kinase family.

The catalysed reaction is 1,6-anhydro-N-acetyl-beta-muramate + ATP + H2O = N-acetyl-D-muramate 6-phosphate + ADP + H(+). The protein operates within amino-sugar metabolism; 1,6-anhydro-N-acetylmuramate degradation. It participates in cell wall biogenesis; peptidoglycan recycling. In terms of biological role, catalyzes the specific phosphorylation of 1,6-anhydro-N-acetylmuramic acid (anhMurNAc) with the simultaneous cleavage of the 1,6-anhydro ring, generating MurNAc-6-P. Is required for the utilization of anhMurNAc either imported from the medium or derived from its own cell wall murein, and thus plays a role in cell wall recycling. This is Anhydro-N-acetylmuramic acid kinase from Pseudomonas savastanoi pv. phaseolicola (strain 1448A / Race 6) (Pseudomonas syringae pv. phaseolicola (strain 1448A / Race 6)).